The sequence spans 707 residues: ATP-dependent zinc metalloprotease FtsH (707 aa).

Over 1–25 the chain is Cytoplasmic; sequence MSELDNKKDKSKDSNKKPKKPGAFS. A helical membrane pass occupies residues 26-46; the sequence is IGNIIIFVIVALLLIWVVFAF. Topologically, residues 47 to 128 are extracellular; sequence LPNNPGTNKS…GTTFTGLELA (82 aa). Residues 129–149 form a helical membrane-spanning segment; the sequence is TLAIANTSASGIGTLNFSGLV. Residues 150–707 lie on the Cytoplasmic side of the membrane; it reads TPTNQALAIL…IKTDESLDIK (558 aa). 246 to 253 lines the ATP pocket; the sequence is GPPGTGKT. Histidine 468 is a Zn(2+) binding site. Residue glutamate 469 is part of the active site. The Zn(2+) site is built by histidine 472 and aspartate 546.

It in the central section; belongs to the AAA ATPase family. In the C-terminal section; belongs to the peptidase M41 family. In terms of assembly, homohexamer. Zn(2+) serves as cofactor.

The protein localises to the cell membrane. Its function is as follows. Acts as a processive, ATP-dependent zinc metallopeptidase for both cytoplasmic and membrane proteins. Plays a role in the quality control of integral membrane proteins. The protein is ATP-dependent zinc metalloprotease FtsH of Mycoplasma mobile (strain ATCC 43663 / 163K / NCTC 11711) (Mesomycoplasma mobile).